Consider the following 500-residue polypeptide: Lysine--tRNA ligase (500 aa).

2 residues coordinate Mg(2+): glutamate 406 and glutamate 413.

This sequence belongs to the class-II aminoacyl-tRNA synthetase family. As to quaternary structure, homodimer. Mg(2+) is required as a cofactor.

Its subcellular location is the cytoplasm. It carries out the reaction tRNA(Lys) + L-lysine + ATP = L-lysyl-tRNA(Lys) + AMP + diphosphate. The protein is Lysine--tRNA ligase of Sulfolobus acidocaldarius (strain ATCC 33909 / DSM 639 / JCM 8929 / NBRC 15157 / NCIMB 11770).